The following is a 120-amino-acid chain: NAD(P)H-quinone oxidoreductase subunit 3, chloroplastic (120 aa).

Helical transmembrane passes span 9–29, 64–84, and 88–108; these read IFWAFLIISSAIPFLAFLISG, MFALVFVVFDVETVFLYPWAM, and VLGVSAFIEAFIFVLILILGL.

This sequence belongs to the complex I subunit 3 family. As to quaternary structure, NDH is composed of at least 16 different subunits, 5 of which are encoded in the nucleus.

It localises to the plastid. Its subcellular location is the chloroplast thylakoid membrane. The enzyme catalyses a plastoquinone + NADH + (n+1) H(+)(in) = a plastoquinol + NAD(+) + n H(+)(out). The catalysed reaction is a plastoquinone + NADPH + (n+1) H(+)(in) = a plastoquinol + NADP(+) + n H(+)(out). Functionally, NDH shuttles electrons from NAD(P)H:plastoquinone, via FMN and iron-sulfur (Fe-S) centers, to quinones in the photosynthetic chain and possibly in a chloroplast respiratory chain. The immediate electron acceptor for the enzyme in this species is believed to be plastoquinone. Couples the redox reaction to proton translocation, and thus conserves the redox energy in a proton gradient. The sequence is that of NAD(P)H-quinone oxidoreductase subunit 3, chloroplastic from Aethionema cordifolium (Lebanon stonecress).